The following is a 461-amino-acid chain: D-phenylhydantoinase (461 aa).

A divalent metal cation contacts are provided by H59, H61, and K151. K151 is modified (N6-carboxylysine). Y156 contributes to the substrate binding site. 2 residues coordinate a divalent metal cation: H182 and H239. S286 contributes to the substrate binding site. Position 313 (D313) interacts with a divalent metal cation. Residue N335 participates in substrate binding.

It belongs to the metallo-dependent hydrolases superfamily. Hydantoinase/dihydropyrimidinase family. Homotetramer. A divalent metal cation is required as a cofactor. Post-translationally, carboxylation allows a single lysine to coordinate two divalent metal cations.

It carries out the reaction D-5-phenylhydantoin + H2O = N-carbamoyl-D-phenylglycine + H(+). Functionally, catalyzes the stereospecific hydrolysis of the cyclic amide bond of D-hydantoin derivatives with an aromatic side chains at the 5'-position. Has no activity on dihydropyrimidines. The physiological function is unknown. The polypeptide is D-phenylhydantoinase (Escherichia coli (strain UTI89 / UPEC)).